Reading from the N-terminus, the 345-residue chain is Holliday junction branch migration complex subunit RuvB (345 aa).

The tract at residues 4–185 (LDNRFVTPLS…FGVLCPMEFY (182 aa)) is large ATPase domain (RuvB-L). Residues Leu24, Arg25, Gly66, Lys69, Thr70, Thr71, 132-134 (EDY), Arg175, Tyr185, and Arg222 contribute to the ATP site. Position 70 (Thr70) interacts with Mg(2+). The tract at residues 186-256 (NEEELKDIIV…MTNKALNLLE (71 aa)) is small ATPAse domain (RuvB-S). A head domain (RuvB-H) region spans residues 259–345 (KEGFDSIDTK…ENINQYKFKI (87 aa)). Residues Arg314 and Arg319 each contribute to the DNA site.

This sequence belongs to the RuvB family. Homohexamer. Forms an RuvA(8)-RuvB(12)-Holliday junction (HJ) complex. HJ DNA is sandwiched between 2 RuvA tetramers; dsDNA enters through RuvA and exits via RuvB. An RuvB hexamer assembles on each DNA strand where it exits the tetramer. Each RuvB hexamer is contacted by two RuvA subunits (via domain III) on 2 adjacent RuvB subunits; this complex drives branch migration. In the full resolvosome a probable DNA-RuvA(4)-RuvB(12)-RuvC(2) complex forms which resolves the HJ.

It localises to the cytoplasm. It carries out the reaction ATP + H2O = ADP + phosphate + H(+). The RuvA-RuvB-RuvC complex processes Holliday junction (HJ) DNA during genetic recombination and DNA repair, while the RuvA-RuvB complex plays an important role in the rescue of blocked DNA replication forks via replication fork reversal (RFR). RuvA specifically binds to HJ cruciform DNA, conferring on it an open structure. The RuvB hexamer acts as an ATP-dependent pump, pulling dsDNA into and through the RuvAB complex. RuvB forms 2 homohexamers on either side of HJ DNA bound by 1 or 2 RuvA tetramers; 4 subunits per hexamer contact DNA at a time. Coordinated motions by a converter formed by DNA-disengaged RuvB subunits stimulates ATP hydrolysis and nucleotide exchange. Immobilization of the converter enables RuvB to convert the ATP-contained energy into a lever motion, pulling 2 nucleotides of DNA out of the RuvA tetramer per ATP hydrolyzed, thus driving DNA branch migration. The RuvB motors rotate together with the DNA substrate, which together with the progressing nucleotide cycle form the mechanistic basis for DNA recombination by continuous HJ branch migration. Branch migration allows RuvC to scan DNA until it finds its consensus sequence, where it cleaves and resolves cruciform DNA. The sequence is that of Holliday junction branch migration complex subunit RuvB from Clostridium tetani (strain Massachusetts / E88).